The sequence spans 426 residues: CAAX prenyl protease 1 homolog (426 aa).

At 1–3 (MVN) the chain is on the lumenal side. The helical transmembrane segment at 4–24 (YFIISISFFLLEHFYSFYLNF) threads the bilayer. At 25-70 (RQSKLLKNLTKVPEYCKDRITQEDFKKSQEYSKAKLDYKTLTSTIQ) the chain is on the cytoplasmic side. A helical membrane pass occupies residues 71 to 91 (VLTTLLSFYYPVYPYFWNLSL). Residues 92-106 (ELAEKIGYPNEIIRS) lie on the Lumenal side of the membrane. A helical membrane pass occupies residues 107–127 (CFFFAFTVGVSVITEIPFSYY). At 128-150 (YQFILEEKFGYNRMTRTLFIKDK) the chain is on the cytoplasmic side. The chain crosses the membrane as a helical span at residues 151–171 (IISTLLMIGFGLPILSLAIFI). Residues 172–178 (INWSGPQ) are Lumenal-facing. A helical membrane pass occupies residues 179 to 199 (LWFYCWLLLVAITLLSITIYP). Topologically, residues 200 to 294 (TFIQPLFNKF…GHYKMSHTLK (95 aa)) are cytoplasmic. His-282 contacts Zn(2+). Glu-283 is a catalytic residue. His-286 lines the Zn(2+) pocket. Residues 295-315 (QMLLVQVHLVTLLYAFSLLIN) form a helical membrane-spanning segment. Topologically, residues 316–333 (DDQLYQQFGFVSSKDSVL) are lumenal. Residues 334–354 (VGLTLFMFLYSPIDRIFSLLI) form a helical membrane-spanning segment. Topologically, residues 355 to 426 (NIFSRKYEFQ…KVALYKLKNK (72 aa)) are cytoplasmic. Glu-362 contacts Zn(2+).

The protein belongs to the peptidase M48B family. Zn(2+) serves as cofactor.

The protein resides in the endoplasmic reticulum membrane. The enzyme catalyses Hydrolyzes the peptide bond -P2-(S-farnesyl or geranylgeranyl)C-P1'-P2'-P3'-COOH where P1' and P2' are amino acids with aliphatic side chains and P3' is any C-terminal residue.. Proteolytically removes the C-terminal three residues of farnesylated proteins. The polypeptide is CAAX prenyl protease 1 homolog (zmpste24) (Dictyostelium discoideum (Social amoeba)).